A 414-amino-acid polypeptide reads, in one-letter code: Putative dipeptidase TRV_05564 (414 aa).

Positions 1-20 (MAALFVSLLALTSLVPVQGA) are cleaved as a signal peptide. 3 residues coordinate Zn(2+): H45, D47, and E157. Residues C96 and C186 are joined by a disulfide bond. H184 provides a ligand contact to substrate. Zn(2+) contacts are provided by H228 and H249. Substrate-binding residues include R260 and D320. N-linked (GlcNAc...) asparagine glycosylation occurs at N392.

The protein belongs to the metallo-dependent hydrolases superfamily. Peptidase M19 family. Zn(2+) is required as a cofactor.

The catalysed reaction is an L-aminoacyl-L-amino acid + H2O = 2 an L-alpha-amino acid. In terms of biological role, hydrolyzes a wide range of dipeptides. The sequence is that of Putative dipeptidase TRV_05564 from Trichophyton verrucosum (strain HKI 0517).